The primary structure comprises 85 residues: Coiled-coil-helix-coiled-coil-helix domain-containing protein 7 (85 aa).

The CHCH domain maps to 13-55 (INPCLSESDASTRCMDENNYDRERCSSYFLKYKNCRRFWNSVM). 2 consecutive short sequence motifs (cx9C motif) follow at residues 16-26 (CLSESDASTRC) and 37-47 (CSSYFLKYKNC). 2 disulfide bridges follow: C16–C47 and C26–C37.

This sequence belongs to the CHCHD7 family. In terms of assembly, monomer.

The protein resides in the mitochondrion intermembrane space. The sequence is that of Coiled-coil-helix-coiled-coil-helix domain-containing protein 7 (Chchd7) from Mus musculus (Mouse).